The primary structure comprises 93 residues: Small ribosomal subunit protein uS19 (93 aa).

It belongs to the universal ribosomal protein uS19 family.

Its function is as follows. Protein S19 forms a complex with S13 that binds strongly to the 16S ribosomal RNA. This Clostridium acetobutylicum (strain ATCC 824 / DSM 792 / JCM 1419 / IAM 19013 / LMG 5710 / NBRC 13948 / NRRL B-527 / VKM B-1787 / 2291 / W) protein is Small ribosomal subunit protein uS19.